Here is a 208-residue protein sequence, read N- to C-terminus: Neuroendocrine protein 7B2 (208 aa).

The signal sequence occupies residues 1 to 26; it reads MGMYSAIPLALPMVLLMVYGLTPSLG. Residues C120 and C129 are joined by a disulfide bond. S204 is subject to Phosphoserine.

Belongs to the 7B2 family. In terms of assembly, interacts with pcsk2 early in the secretory pathway. Dissociation occurs at later stages. Proteolytically cleaved in the Golgi by a furin-like convertase to generate bioactive peptides. In terms of processing, sulfated on tyrosine residues.

It is found in the secreted. Functionally, acts as a molecular chaperone for pcsk2, preventing its premature activation in the regulated secretory pathway. Binds to inactive pcsk2 in the endoplasmic reticulum and facilitates its transport from there to later compartments of the secretory pathway where it is proteolytically matured and activated. Also required for cleavage of pcsk2 but does not appear to be involved in its folding. This is Neuroendocrine protein 7B2 (scg5.L) from Xenopus laevis (African clawed frog).